Here is a 259-residue protein sequence, read N- to C-terminus: Phosphoribosylaminoimidazole-succinocarboxamide synthase (259 aa).

Belongs to the SAICAR synthetase family.

It catalyses the reaction 5-amino-1-(5-phospho-D-ribosyl)imidazole-4-carboxylate + L-aspartate + ATP = (2S)-2-[5-amino-1-(5-phospho-beta-D-ribosyl)imidazole-4-carboxamido]succinate + ADP + phosphate + 2 H(+). The protein operates within purine metabolism; IMP biosynthesis via de novo pathway; 5-amino-1-(5-phospho-D-ribosyl)imidazole-4-carboxamide from 5-amino-1-(5-phospho-D-ribosyl)imidazole-4-carboxylate: step 1/2. In Zymomonas mobilis subsp. mobilis (strain ATCC 31821 / ZM4 / CP4), this protein is Phosphoribosylaminoimidazole-succinocarboxamide synthase.